Here is a 296-residue protein sequence, read N- to C-terminus: Nucleotide-binding protein M28_Spy0517 (296 aa).

13 to 20 is a binding site for ATP; that stretch reads GMSGAGKT. Position 63 to 66 (63 to 66) interacts with GTP; the sequence is DMRS.

It belongs to the RapZ-like family.

Displays ATPase and GTPase activities. This Streptococcus pyogenes serotype M28 (strain MGAS6180) protein is Nucleotide-binding protein M28_Spy0517.